The chain runs to 142 residues: Large ribosomal subunit protein uL13 (142 aa).

This sequence belongs to the universal ribosomal protein uL13 family. In terms of assembly, part of the 50S ribosomal subunit.

Functionally, this protein is one of the early assembly proteins of the 50S ribosomal subunit, although it is not seen to bind rRNA by itself. It is important during the early stages of 50S assembly. The chain is Large ribosomal subunit protein uL13 from Shigella dysenteriae serotype 1 (strain Sd197).